A 187-amino-acid polypeptide reads, in one-letter code: Photosystem I assembly protein Ycf4 (187 aa).

2 helical membrane-spanning segments follow: residues 25–45 (YLWA…GISS) and 69–89 (MSFY…TVIW).

Belongs to the Ycf4 family.

It localises to the cellular thylakoid membrane. In terms of biological role, seems to be required for the assembly of the photosystem I complex. This Trichodesmium erythraeum (strain IMS101) protein is Photosystem I assembly protein Ycf4.